Here is a 954-residue protein sequence, read N- to C-terminus: Bifunctional endo-1,4-beta-xylanase XylA (954 aa).

The or 28, or 29 signal peptide spans 1-27 (MKLSKIKKVLSGTVSALMIASAAPVVA). The GH11 domain occupies 29–236 (AADQQTRGNV…SNGSANVKSV (208 aa)). Glutamate 122 serves as the catalytic Nucleophile. The active-site Proton donor is glutamate 223. The span at 233-243 (VKSVSVTQGGS) shows a compositional bias: polar residues. Residues 233 to 628 (VKSVSVTQGG…NNNNSAGSSD (396 aa)) are disordered. Over residues 246–622 (NGGQQQNNDW…WNQGQQNNNN (377 aa)) the composition is skewed to low complexity. In terms of domain architecture, GH10 spans 624 to 952 (AGSSDSLKGA…KPAYDRVMAL (329 aa)). Glutamate 774 serves as the catalytic Proton donor. Glutamate 884 functions as the Nucleophile in the catalytic mechanism.

In the N-terminal section; belongs to the glycosyl hydrolase 11 (cellulase G) family. This sequence in the C-terminal section; belongs to the glycosyl hydrolase 10 (cellulase F) family.

It catalyses the reaction Endohydrolysis of (1-&gt;4)-beta-D-xylosidic linkages in xylans.. It participates in glycan degradation; xylan degradation. In terms of biological role, xylanase domain releases more xylo-oligosaccharides and GH10 domain more xylose. The polypeptide is Bifunctional endo-1,4-beta-xylanase XylA (xynA) (Ruminococcus flavefaciens).